A 380-amino-acid polypeptide reads, in one-letter code: Lipid-A-disaccharide synthase (380 aa).

It belongs to the LpxB family.

The enzyme catalyses a lipid X + a UDP-2-N,3-O-bis[(3R)-3-hydroxyacyl]-alpha-D-glucosamine = a lipid A disaccharide + UDP + H(+). It functions in the pathway bacterial outer membrane biogenesis; LPS lipid A biosynthesis. Condensation of UDP-2,3-diacylglucosamine and 2,3-diacylglucosamine-1-phosphate to form lipid A disaccharide, a precursor of lipid A, a phosphorylated glycolipid that anchors the lipopolysaccharide to the outer membrane of the cell. This is Lipid-A-disaccharide synthase from Photobacterium profundum (strain SS9).